Reading from the N-terminus, the 798-residue chain is Acetamidase regulatory protein (798 aa).

The zn(2)-C6 fungal-type DNA-binding region spans 20 to 50 (CVHCHRRKVRCDARLVGLPCSNCRSAGKTDC). Disordered stretches follow at residues 68-96 (VPIRCRPPNPEEAPKPISSLSPSSEPPNA), 115-172 (ANRV…ESRA), and 632-714 (LRTT…TLSA). Composition is skewed to low complexity over residues 82–94 (KPISSLSPSSEPP) and 133–147 (TRSNNNSGNNTQYQN). A compositionally biased stretch (basic and acidic residues) spans 632–641 (LRTTTSDRPR). Positions 644 to 663 (SNLSNNSTNSPASQQKNTSG) are enriched in polar residues. Residues 678 to 687 (PSAPSIPPLQ) show a composition bias toward pro residues.

It is found in the nucleus. Positively regulates the expression of 5 genes involved in the catabolism of certain amides (amdS), omega amino acids (gatA and gabA), and lactams (lamA and lamB) in the presence of omega amino acid inducers. This Emericella nidulans (strain FGSC A4 / ATCC 38163 / CBS 112.46 / NRRL 194 / M139) (Aspergillus nidulans) protein is Acetamidase regulatory protein (amdR).